The following is a 360-amino-acid chain: Phospho-N-acetylmuramoyl-pentapeptide-transferase (360 aa).

10 helical membrane-spanning segments follow: residues 24 to 44 (RAVM…PWTI), 69 to 89 (GTPT…TLLW), 92 to 112 (WANP…ALGF), 133 to 153 (MVWQ…LAAN), 158 to 178 (ILIV…GFLV), 199 to 219 (GLAA…AYVS), 239 to 259 (VAIF…FNAY), 263 to 283 (VFMG…VAVI), 288 to 308 (FVLV…MLQV), and 337 to 357 (QVVV…LSTL).

This sequence belongs to the glycosyltransferase 4 family. MraY subfamily. It depends on Mg(2+) as a cofactor.

Its subcellular location is the cell inner membrane. The catalysed reaction is UDP-N-acetyl-alpha-D-muramoyl-L-alanyl-gamma-D-glutamyl-meso-2,6-diaminopimeloyl-D-alanyl-D-alanine + di-trans,octa-cis-undecaprenyl phosphate = di-trans,octa-cis-undecaprenyl diphospho-N-acetyl-alpha-D-muramoyl-L-alanyl-D-glutamyl-meso-2,6-diaminopimeloyl-D-alanyl-D-alanine + UMP. The protein operates within cell wall biogenesis; peptidoglycan biosynthesis. Its function is as follows. Catalyzes the initial step of the lipid cycle reactions in the biosynthesis of the cell wall peptidoglycan: transfers peptidoglycan precursor phospho-MurNAc-pentapeptide from UDP-MurNAc-pentapeptide onto the lipid carrier undecaprenyl phosphate, yielding undecaprenyl-pyrophosphoryl-MurNAc-pentapeptide, known as lipid I. The chain is Phospho-N-acetylmuramoyl-pentapeptide-transferase from Neisseria gonorrhoeae (strain ATCC 700825 / FA 1090).